The primary structure comprises 517 residues: Crotonobetaine/carnitine--CoA ligase (517 aa).

Belongs to the ATP-dependent AMP-binding enzyme family.

The catalysed reaction is 4-(trimethylamino)butanoate + ATP + CoA = 4-(trimethylamino)butanoyl-CoA + AMP + diphosphate. It catalyses the reaction crotonobetaine + ATP + CoA = crotonobetainyl-CoA + AMP + diphosphate. It carries out the reaction (R)-carnitine + ATP + CoA = (R)-carnitinyl-CoA + AMP + diphosphate. The protein operates within amine and polyamine metabolism; carnitine metabolism. Functionally, catalyzes the transfer of CoA to carnitine, generating the initial carnitinyl-CoA needed for the CaiB reaction cycle. Also has activity toward crotonobetaine and gamma-butyrobetaine. The protein is Crotonobetaine/carnitine--CoA ligase of Salmonella enteritidis PT4 (strain P125109).